The sequence spans 2581 residues: Chromodomain-helicase-DNA-binding protein 8 (2581 aa).

3 disordered regions span residues 22–114 (DDSF…QTST), 253–281 (VKGS…TPAQ), and 349–375 (QKIQ…PLTL). Composition is skewed to polar residues over residues 42–64 (SLDS…SSAS) and 94–114 (DYTT…QTST). Residues 255-267 (GSAPAGNPGATGP) are compositionally biased toward low complexity. The segment covering 355–370 (PQPPSSQPQPQPPPSA) has biased composition (pro residues). A Phosphoserine modification is found at Ser432. Disordered stretches follow at residues 473–584 (RARG…KRKK) and 596–616 (DEEE…ILPE). Residues 493-516 (RPEEEGEKKRRKKSSGERLKEEKP) show a composition bias toward basic and acidic residues. Phosphoserine occurs at positions 553 and 562. The segment covering 572–584 (QKRRSNRQVKRKK) has biased composition (basic residues). Lys609 is covalently cross-linked (Glycyl lysine isopeptide (Lys-Gly) (interchain with G-Cter in SUMO)). Chromo domains are found at residues 642-709 (AIVD…AQMR) and 724-790 (VEVD…RVNR). The Helicase ATP-binding domain occupies 823-997 (LFNWYNRQNC…FSLLHFLEPS (175 aa)). 836 to 843 (DEMGLGKT) lines the ATP pocket. A DEAH box motif is present at residues 948 to 951 (DEAH). One can recognise a Helicase C-terminal domain in the interval 1137–1288 (LIDKLLPKLK…KAVLQSMSGR (152 aa)). Residues Ser1420 and Ser1424 each carry the phosphoserine modification. Residues 1692-1713 (EDPEYKPLQGPPKDPDDEGDPL) form a disordered region. The tract at residues 1789 to 2302 (IARREKQQRW…LVELEVECME (514 aa)) is interaction with FAM124B. A phosphoserine mark is found at Ser1976 and Ser1978. Residues 1988–2016 (QCTSRTASPSPLRPDVPAEKSPEENAVQV) form a disordered region. At Thr1993 the chain carries Phosphothreonine. Phosphoserine is present on residues Ser1995, Ser1997, and Ser2008. A Glycyl lysine isopeptide (Lys-Gly) (interchain with G-Cter in SUMO2) cross-link involves residue Lys2025. Disordered regions lie at residues 2047 to 2118 (SSDT…YDEE) and 2179 to 2221 (NRRS…SSSA). Over residues 2063-2072 (EDDDDSDSEL) the composition is skewed to acidic residues. 2 positions are modified to phosphoserine: Ser2068 and Ser2070. Residues 2075-2094 (SKLSPSSSSSSSSSSSSSSS) are compositionally biased toward low complexity. Over residues 2102–2116 (EEKLTADRSRPKLYD) the composition is skewed to basic and acidic residues. 3 positions are modified to phosphoserine: Ser2182, Ser2200, and Ser2202. Thr2204 carries the phosphothreonine modification. Phosphoserine is present on Ser2211. Position 2215 is a phosphothreonine (Thr2215). Ser2223 is modified (phosphoserine). Residue Lys2256 forms a Glycyl lysine isopeptide (Lys-Gly) (interchain with G-Cter in SUMO2) linkage. The segment at 2484–2581 (PHVDSSTMLH…NSDSSDDADD (98 aa)) is disordered. Positions 2492–2510 (LHHHHHHPHPHHHHHHHPG) are enriched in basic residues. Residues 2513–2528 (TTGYPSSPATTTSGTA) are compositionally biased toward low complexity. At Ser2519 the chain carries Phosphoserine. The segment covering 2537–2550 (EDDDEEEDEDDDDL) has biased composition (acidic residues). A compositionally biased stretch (low complexity) spans 2565–2574 (DDPMMPANSD).

The protein belongs to the SNF2/RAD54 helicase family. CHD8 subfamily. Interacts with p53/TP53, histone H1 and CTCF. Component of some MLL1/MLL complex, at least composed of the core components KMT2A/MLL1, ASH2L, HCFC1/HCF1, WDR5 and RBBP5, as well as the facultative components BACC1, CHD8, E2F6, HSP70, INO80C, KANSL1, LAS1L, MAX, MCRS1, MGA, KAT8/MOF, PELP1, PHF20, PRP31, RING2, RUVB1/TIP49A, RUVB2/TIP49B, SENP3, TAF1, TAF4, TAF6, TAF7, TAF9 and TEX10. Interacts with CHD7. Interacts with FAM124B. Interacts with CTNNB1. Interacts with PIAS3. Interacts with TLK2. Interacts with HNRNPL in an RNA-dependent manner. In terms of processing, sumoylated.

It localises to the nucleus. It catalyses the reaction ATP + H2O = ADP + phosphate + H(+). In terms of biological role, ATP-dependent chromatin-remodeling factor, it slides nucleosomes along DNA; nucleosome sliding requires ATP. Acts as a transcription repressor by remodeling chromatin structure and recruiting histone H1 to target genes. Suppresses p53/TP53-mediated apoptosis by recruiting histone H1 and preventing p53/TP53 transactivation activity. Acts as a negative regulator of Wnt signaling pathway by regulating beta-catenin (CTNNB1) activity. Negatively regulates CTNNB1-targeted gene expression by being recruited specifically to the promoter regions of several CTNNB1 responsive genes. Involved in both enhancer blocking and epigenetic remodeling at chromatin boundary via its interaction with CTCF. Acts as a suppressor of STAT3 activity by suppressing the LIF-induced STAT3 transcriptional activity. Also acts as a transcription activator via its interaction with ZNF143 by participating in efficient U6 RNA polymerase III transcription. Regulates alternative splicing of a core group of genes involved in neuronal differentiation, cell cycle and DNA repair. Enables H3K36me3-coupled transcription elongation and co-transcriptional RNA processing likely via interaction with HNRNPL. The chain is Chromodomain-helicase-DNA-binding protein 8 from Rattus norvegicus (Rat).